Reading from the N-terminus, the 589-residue chain is Protein NRT1/ PTR FAMILY 7.2 (589 aa).

Helical transmembrane passes span 32–52 and 78–98; these read WLTA…FFGV and WTGT…SYWG. A Phosphothreonine modification is found at T102. Transmembrane regions (helical) follow at residues 105 to 125, 147 to 167, 187 to 207, 217 to 237, 343 to 363, 377 to 397, 423 to 443, 464 to 484, 504 to 524, and 548 to 568; these read IFQA…GALL, VLFY…QPNI, IAFF…SNTV, WPLG…LFLI, IWLC…LFVV, IPAS…IFAY, MGIG…VEIH, IFWQ…MYVG, LCMA…SIVM, and FYFL…ICAK.

This sequence belongs to the major facilitator superfamily. Proton-dependent oligopeptide transporter (POT/PTR) (TC 2.A.17) family. As to expression, expressed in xylem parenchyma cells within the vasculature. Expressed in siliques and flowers. Higher expression in shoots than in roots.

It is found in the cell membrane. Low-affinity nitrate transporter. Involved in nitrate removal from xylem sap. Not involved in oligopeptides transport. In Arabidopsis thaliana (Mouse-ear cress), this protein is Protein NRT1/ PTR FAMILY 7.2 (NPF7.2).